Reading from the N-terminus, the 178-residue chain is Large ribosomal subunit protein bL25 (178 aa).

Belongs to the bacterial ribosomal protein bL25 family. CTC subfamily. As to quaternary structure, part of the 50S ribosomal subunit; part of the 5S rRNA/L5/L18/L25 subcomplex. Contacts the 5S rRNA. Binds to the 5S rRNA independently of L5 and L18.

In terms of biological role, this is one of the proteins that binds to the 5S RNA in the ribosome where it forms part of the central protuberance. The chain is Large ribosomal subunit protein bL25 from Helicobacter pylori (strain P12).